Here is a 617-residue protein sequence, read N- to C-terminus: Isopropyl malate synthase gloH (617 aa).

The 279-residue stretch at 47-325 (PIWLSTDLRD…ETGLDFSDLL (279 aa)) folds into the Pyruvate carboxyltransferase domain.

This sequence belongs to the alpha-IPM synthase/homocitrate synthase family. LeuA type 2 subfamily.

The catalysed reaction is 3-methyl-2-oxobutanoate + acetyl-CoA + H2O = (2S)-2-isopropylmalate + CoA + H(+). The protein operates within mycotoxin biosynthesis. 2-isopropylmalate synthase; part of the gene cluster that mediates the biosynthesis of pneumocandins, lipohexapeptides of the echinocandin family that prevent fungal cell wall formation by non-competitive inhibition of beta-1,3-glucan synthase. The 10,12-dimethylmyristoyl side chain is synthesized by the reducing polyketide synthase gloL/GLPKS4. The thioesterase gloN/GLHYD exclusively interacts with gloL/GLPKS4 to maintain turnover of the polyketide side chain. The 10R,12S-dimethylmyristic acid is then transferred to the first thiolation domain of the nonribosomal peptide synthetase gloA/GLNRPS4 by the acyl-AMP ligase gloD/GLligase, followed by its acylation to L-ornithine to trigger elongation of the cyclic hexapeptide. L-ornithine, 4R-hydroxyl-L-proline (generated from L-proline by the dioxygenase gloF/GLOXY2), 3S-hydroxyl-L-homotyrosine (generated by gloG/GLHtyB, gloH/GLHtyA, gloI/GLHtyC, gloJ/GLHtyD and hydroxylated at C-3 by the dioxygenase gloM/GLOXY1), 3R-hydroxyl-L-glutamine (generated from L-glutamine probably by the dioxygenase gloE/GLOXY3) and 3S-hydroxyl-L-proline (generated from L-proline by the dioxygenase gloF/GLOXY2 to yield pneumocandin B0), or 3S-hydroxyl-4S-methyl-L-proline (generated from L-leucine by the dioxygenase gloC/GLOXY4 to yield pneumocandin A0) are sequentially added to the growing chain. The last C domain of gloA/GLNRPS4 is proposed to be responsible for cyclization by condensation to form the peptide bond between L-ornithine and 3S-hydroxyl-4S-methyl-L-proline (for pneumocandin A0) or 3S-hydroxyl-L-proline (for pneumocandin B0). Finally, the subsequent C-4 hydroxylation of 3S-hydroxyl-L-homotyrosine and L-ornithine dihydroxylation at C-4 and C-5 are performed by the cytochrome P450 monooxygenases gloP/GLP450-1 and gloO/GLP450-2, respectively. This Glarea lozoyensis (strain ATCC 20868 / MF5171) protein is Isopropyl malate synthase gloH.